The primary structure comprises 313 residues: MSIINTSYVEITTFFLVGMPGLEYAHIWISIPICSMYLIAILGNGTILFIIKTEPSLHEPMYYFLSMLAMSDLGLSLSSLPTVLSIFLFNAPEISSNACFAQEFFIHGFSVLESSVLLIMSFDRFLAIHNPLRYTSILTTVRVAQIGIVFSFKSMLLVLPFPFTLRNLRYCKKNQLSHSYCLHQDVMKLACSDNRIDVIYGFFGALCLMVDFILIAVSYTLILKTVLGIASKKEQLKALNTCVSHICAVIIFYLPIINLAVVHRFARHVSPLINVLMANVLLLVPPLTNPIVYCVKTKQIRVRVVAKLCQRKI.

Topologically, residues methionine 1 to isoleucine 27 are extracellular. Residue asparagine 5 is glycosylated (N-linked (GlcNAc...) asparagine). A helical transmembrane segment spans residues tryptophan 28 to leucine 48. Topologically, residues phenylalanine 49 to serine 56 are cytoplasmic. The helical transmembrane segment at leucine 57–leucine 77 threads the bilayer. Topologically, residues serine 78–alanine 101 are extracellular. Cysteine 99 and cysteine 191 are joined by a disulfide. The chain crosses the membrane as a helical span at residues glutamine 102 to phenylalanine 122. Topologically, residues aspartate 123–valine 141 are cytoplasmic. A helical membrane pass occupies residues arginine 142 to proline 162. Residues phenylalanine 163–valine 198 are Extracellular-facing. Residues isoleucine 199–serine 218 form a helical membrane-spanning segment. The Cytoplasmic segment spans residues tyrosine 219–alanine 238. The helical transmembrane segment at leucine 239–leucine 259 threads the bilayer. At alanine 260–asparagine 274 the chain is on the extracellular side. The helical transmembrane segment at valine 275–valine 295 threads the bilayer. Over lysine 296 to isoleucine 313 the chain is Cytoplasmic.

Belongs to the G-protein coupled receptor 1 family.

The protein resides in the cell membrane. Odorant receptor. The sequence is that of Olfactory receptor 51A4 (OR51A4) from Homo sapiens (Human).